We begin with the raw amino-acid sequence, 601 residues long: MDTTHDRRTSLSCDECRRRKLKCDRVRPQCGTCALSESECVFPGDSRKRGPKKGQLQALRARIRTLEQQLAAKDATWNMTYDFQDSTAAEPDEFSQCIQPNVNVFEPESMETLIFGIASSTSWPKNGMTPLDPALGAESHDSHISSTLSSLSLSALVQADLEQLFFDRVYQSAPIIHKARYITLMEQEDPLPACVCLRLAIRTSAAAFSARYHDIGERLYLETLQSLESLESNEHTLPWGAKNIQIEHIQSWLLLAVYEHMRMDKSQASSATSRALRLVQRCRLGDLDASDCLIQVGSHTTTATEEDFAVMEEKRRTFWLAFCFDRLLNTRDDLNWALPEEMVGFQHGHSLFSPGHFQGASLMYDLQIRMRVPASEASFQHSQDTNMPLLSEVMGEGNDDSLSPFATCVALMALYGCCATHRRLVSIAGGSGNESTKFWMRHNWLMSAIEKQRRLLQAPESTPNIFGDDPMLAFTHFFVPTLILHLVETADLWQWHSAEQEELRSVYKQQAYIAAKDRTRVAESLLCFSGFKVHPFLPTVLVRFFDFSGKRRIEMSDPDATSESRRNIRAMTKVLSLLRDIHRSAKEIPDDVLDGLETTLL.

Positions 13–40 (CDECRRRKLKCDRVRPQCGTCALSESEC) form a DNA-binding region, zn(2)-C6 fungal-type.

It is found in the nucleus. In terms of biological role, transcription factor that regulates the expression of the gene cluster that mediates the biosynthesis of abscisic acid (ABA), a phytohormone that acts antagonistically toward salicylic acid (SA), jasmonic acid (JA) and ethylene (ETH) signaling, to impede plant defense responses. The sequence is that of Abscisic acid cluster transcription factor abl7 from Leptosphaeria maculans (strain JN3 / isolate v23.1.3 / race Av1-4-5-6-7-8) (Blackleg fungus).